Reading from the N-terminus, the 121-residue chain is UPF0344 protein BCA_1194 (121 aa).

4 helical membrane passes run isoleucine 6 to glycine 26, leucine 38 to alanine 58, tryptophan 65 to valine 85, and alanine 92 to leucine 112.

It belongs to the UPF0344 family.

The protein resides in the cell membrane. This Bacillus cereus (strain 03BB102) protein is UPF0344 protein BCA_1194.